Here is a 122-residue protein sequence, read N- to C-terminus: Large ribosomal subunit protein uL14 (122 aa).

This sequence belongs to the universal ribosomal protein uL14 family. As to quaternary structure, part of the 50S ribosomal subunit. Forms a cluster with proteins L3 and L19. In the 70S ribosome, L14 and L19 interact and together make contacts with the 16S rRNA in bridges B5 and B8.

Functionally, binds to 23S rRNA. Forms part of two intersubunit bridges in the 70S ribosome. This chain is Large ribosomal subunit protein uL14, found in Solidesulfovibrio magneticus (strain ATCC 700980 / DSM 13731 / RS-1) (Desulfovibrio magneticus).